Consider the following 171-residue polypeptide: uncharacterized protein (171 aa).

In terms of domain architecture, PfpI endopeptidase spans Lys3 to Gln171.

Belongs to the peptidase C56 family.

This is an uncharacterized protein from Staphylococcus aureus (strain COL).